The chain runs to 513 residues: ATP synthase subunit alpha (513 aa).

169–176 contacts ATP; sequence GDRQTGKT.

Belongs to the ATPase alpha/beta chains family. F-type ATPases have 2 components, CF(1) - the catalytic core - and CF(0) - the membrane proton channel. CF(1) has five subunits: alpha(3), beta(3), gamma(1), delta(1), epsilon(1). CF(0) has three main subunits: a(1), b(2) and c(9-12). The alpha and beta chains form an alternating ring which encloses part of the gamma chain. CF(1) is attached to CF(0) by a central stalk formed by the gamma and epsilon chains, while a peripheral stalk is formed by the delta and b chains.

Its subcellular location is the cell inner membrane. The enzyme catalyses ATP + H2O + 4 H(+)(in) = ADP + phosphate + 5 H(+)(out). Produces ATP from ADP in the presence of a proton gradient across the membrane. The alpha chain is a regulatory subunit. This Haemophilus ducreyi (strain 35000HP / ATCC 700724) protein is ATP synthase subunit alpha.